Consider the following 183-residue polypeptide: Ribosome rescue factor SmrB (183 aa).

In terms of domain architecture, Smr spans 98 to 173; that stretch reads LDLHGLTQLQ…GDAALLVLIE (76 aa).

It belongs to the SmrB family. In terms of assembly, associates with collided ribosomes, but not with correctly translating polysomes.

Functionally, acts as a ribosome collision sensor. Detects stalled/collided disomes (pairs of ribosomes where the leading ribosome is stalled and a second ribosome has collided with it) and endonucleolytically cleaves mRNA at the 5' boundary of the stalled ribosome. Stalled/collided disomes form a new interface (primarily via the 30S subunits) that binds SmrB. Cleaved mRNA becomes available for tmRNA ligation, leading to ribosomal subunit dissociation and rescue of stalled ribosomes. The chain is Ribosome rescue factor SmrB from Escherichia coli O157:H7.